Consider the following 352-residue polypeptide: Quinolinate synthase (352 aa).

The iminosuccinate site is built by His48 and Ser69. Cys114 provides a ligand contact to [4Fe-4S] cluster. Iminosuccinate-binding positions include Tyr140–Asn142 and Ser157. Cys201 contacts [4Fe-4S] cluster. Iminosuccinate is bound by residues His227–Glu229 and Thr244. Cys298 serves as a coordination point for [4Fe-4S] cluster.

Belongs to the quinolinate synthase family. Type 1 subfamily. Requires [4Fe-4S] cluster as cofactor.

It localises to the cytoplasm. It carries out the reaction iminosuccinate + dihydroxyacetone phosphate = quinolinate + phosphate + 2 H2O + H(+). It functions in the pathway cofactor biosynthesis; NAD(+) biosynthesis; quinolinate from iminoaspartate: step 1/1. Functionally, catalyzes the condensation of iminoaspartate with dihydroxyacetone phosphate to form quinolinate. In Pseudomonas aeruginosa (strain UCBPP-PA14), this protein is Quinolinate synthase.